The chain runs to 441 residues: MSIDIDWERATSGPDGELLAERIRSFIHDKFQQMVLPRFIRSVQVTSFNFGTIPPELEIRDLTDPFPDFYEDGDEDLSVSSEEQSPMREQADRYRERIDSWQANSPGGLEVQMSGRMGFGHPLQLAPDEDGSRLHPLRSPINLGDINPYLFPRSGTPGIPGGTSNLGYFMPLSGLSGSQTPLRAVTRGNPFSGGWPDSPLENESRIGHGQGPPRRRSEVNVDAIQSRPSTANTGNTLFSRGSVSTGDPRHSHSSQTVLANNPGQAPEANDSPVSAVPPLSGTPPRRMREQKAEDFQVFCRTKYAGNISLSLTAEILLDYPMPSFVGLPLKLNITGLTFDAVAVLAYIRRRIHFCFLSPEDAYALIGPETGGGGGDTMEPNSLRRKNLSLLRKIRVESEIGRKENGKQALKNVGKVEKFVLEQVRRIFEEEFVYPSFWTFLV.

The SMP-LTD domain occupies 1–441 (MSIDIDWERA…VYPSFWTFLV (441 aa)). The segment at 180–289 (TPLRAVTRGN…SGTPPRRMRE (110 aa)) is disordered. Polar residues-rich tracts occupy residues 226–245 (SRPS…SVST) and 253–263 (SSQTVLANNPG).

Belongs to the MDM12 family. Component of the ER-mitochondria encounter structure (ERMES) or MDM complex, composed of MMM1, MDM10, MDM12 and MDM34. An MMM1 homodimer associates with one molecule of MDM12 on each side in a pairwise head-to-tail manner, and the SMP-LTD domains of MMM1 and MDM12 generate a continuous hydrophobic tunnel for phospholipid trafficking.

It is found in the mitochondrion outer membrane. The protein localises to the endoplasmic reticulum membrane. Component of the ERMES/MDM complex, which serves as a molecular tether to connect the endoplasmic reticulum (ER) and mitochondria. Components of this complex are involved in the control of mitochondrial shape and protein biogenesis, and function in nonvesicular lipid trafficking between the ER and mitochondria. MDM12 is required for the interaction of the ER-resident membrane protein MMM1 and the outer mitochondrial membrane-resident beta-barrel protein MDM10. The MDM12-MMM1 subcomplex functions in the major beta-barrel assembly pathway that is responsible for biogenesis of all mitochondrial outer membrane beta-barrel proteins, and acts in a late step after the SAM complex. The MDM10-MDM12-MMM1 subcomplex further acts in the TOM40-specific pathway after the action of the MDM12-MMM1 complex. Essential for establishing and maintaining the structure of mitochondria and maintenance of mtDNA nucleoids. The protein is Mitochondrial distribution and morphology protein 12 of Paracoccidioides brasiliensis (strain Pb18).